We begin with the raw amino-acid sequence, 126 residues long: MSAYRQPVERYWWARRRSYLRFMLREISCIFVAWFVLYLMLVLRAVGAGGNSYQRFLDFSANPVVVVLNVVALSFLLLHAVTWFGSAPRAMVIQVRGRRVPARAVLAGHYAAWLVVSVIVAWMVLS.

Helical transmembrane passes span 30–50, 64–84, and 105–125; these read IFVA…GAGG, VVVV…VTWF, and VLAG…WMVL.

This sequence belongs to the FrdC family. As to quaternary structure, part of an enzyme complex containing four subunits: a flavoprotein (FrdA), an iron-sulfur protein (FrdB), and two hydrophobic anchor proteins (FrdC and FrdD).

The protein localises to the cell membrane. In terms of biological role, anchors the catalytic components of the fumarate reductase complex to the cell membrane, binds quinones. This is Fumarate reductase subunit C from Mycobacterium tuberculosis (strain ATCC 25177 / H37Ra).